Here is a 183-residue protein sequence, read N- to C-terminus: Transcription factor E (183 aa).

An HTH TFE/IIEalpha-type domain is found at 4–97 (YIELVRRYVY…SWSIKDEDIR (94 aa)).

It belongs to the TFE family. As to quaternary structure, monomer. Interaction with RNA polymerase subunits RpoF and RpoE is necessary for Tfe stimulatory transcription activity. Able to interact with Tbp and RNA polymerase in the absence of DNA promoter. Interacts both with the preinitiation and elongation complexes.

Functionally, transcription factor that plays a role in the activation of archaeal genes transcribed by RNA polymerase. Facilitates transcription initiation by enhancing TATA-box recognition by TATA-box-binding protein (Tbp), and transcription factor B (Tfb) and RNA polymerase recruitment. Not absolutely required for transcription in vitro, but particularly important in cases where Tbp or Tfb function is not optimal. It dynamically alters the nucleic acid-binding properties of RNA polymerases by stabilizing the initiation complex and destabilizing elongation complexes. Seems to translocate with the RNA polymerase following initiation and acts by binding to the non template strand of the transcription bubble in elongation complexes. The sequence is that of Transcription factor E from Caldivirga maquilingensis (strain ATCC 700844 / DSM 13496 / JCM 10307 / IC-167).